Reading from the N-terminus, the 247-residue chain is Exosome complex component Rrp4 (247 aa).

The region spanning 75–148 (DDLVIGIVEN…RDPVITVKGK (74 aa)) is the S1 motif domain. Residues 154–220 (TEGVVVDVKP…QAIKLIELKA (67 aa)) enclose the KH domain.

This sequence belongs to the RRP4 family. As to quaternary structure, component of the archaeal exosome complex. Forms a trimer of Rrp4 and/or Csl4 subunits. The trimer associates with a hexameric ring-like arrangement composed of 3 Rrp41-Rrp42 heterodimers.

Its subcellular location is the cytoplasm. Functionally, non-catalytic component of the exosome, which is a complex involved in RNA degradation. Increases the RNA binding and the efficiency of RNA degradation. Confers strong poly(A) specificity to the exosome. This Thermosphaera aggregans (strain DSM 11486 / M11TL) protein is Exosome complex component Rrp4.